The primary structure comprises 337 residues: CMP-sialic acid transporter (337 aa).

At 1-9 (MAAPRDNVT) the chain is on the cytoplasmic side. The chain crosses the membrane as a helical span at residues 10-30 (LLFKLYCLAVMTLMAAVYTIA). Residues 31 to 45 (LRYTRTSDKELYFST) are Lumenal-facing. Residues 46–64 (TAVCITEVIKLLLSVGILA) traverse the membrane as a helical segment. Residue Lys-55 coordinates CMP-N-acetyl-beta-neuraminate. Residues 65–87 (KETGSLGRFKASLRENVLGSPKE) lie on the Cytoplasmic side of the membrane. Residues 88–108 (LLKLSVPSLVYAVQNNMAFLA) form a helical membrane-spanning segment. 101–102 (QN) serves as a coordination point for CMP-N-acetyl-beta-neuraminate. Over 109-114 (LSNLDA) the chain is Lumenal. Residues 115–135 (AVYQVTYQLKIPCTALCTVLM) form a helical membrane-spanning segment. 117–124 (YQVTYQLK) lines the CMP-N-acetyl-beta-neuraminate pocket. Over 136-141 (LNRTLS) the chain is Cytoplasmic. Residues 142–160 (KLQWVSVFMLCAGVTLVQW) form a helical membrane-spanning segment. Residues 161 to 175 (KPAQATKVVVEQNPL) lie on the Lumenal side of the membrane. The chain crosses the membrane as a helical span at residues 176 to 196 (LGFGAIAIAVLCSGFAGVYFE). Ser-188 is a binding site for CMP-N-acetyl-beta-neuraminate. The Cytoplasmic portion of the chain corresponds to 197–209 (KVLKSSDTSLWVR). 210–214 (NIQMY) lines the CMP-N-acetyl-beta-neuraminate pocket. Residues 210 to 228 (NIQMYLSGIIVTLAGVYLS) traverse the membrane as a helical segment. Topologically, residues 229 to 243 (DGAEIKEKGFFYGYT) are lumenal. The helical transmembrane segment at 244 to 262 (YYVWFVIFLASVGGLYTSV) threads the bilayer. The Cytoplasmic segment spans residues 263–269 (VVKYTDN). A helical transmembrane segment spans residues 270-288 (IMKGFSAAAAIVLSTIASV). A CMP-N-acetyl-beta-neuraminate-binding site is contributed by Lys-272. Over 289-296 (MLFGLQIT) the chain is Lumenal. A helical membrane pass occupies residues 297–315 (LTFALGTLLVCVSIYLYGL). The Cytoplasmic portion of the chain corresponds to 316–337 (PRQDTTSIQQGETASKERVIGV). The disordered stretch occupies residues 316 to 337 (PRQDTTSIQQGETASKERVIGV).

The protein belongs to the nucleotide-sugar transporter family. SLC35A subfamily. As to quaternary structure, monomer.

The protein resides in the golgi apparatus membrane. The protein localises to the golgi apparatus. The enzyme catalyses CMP-N-acetyl-beta-neuraminate(in) + CMP(out) = CMP-N-acetyl-beta-neuraminate(out) + CMP(in). It catalyses the reaction CMP-N-acetyl-beta-neuraminate(in) + AMP(out) = CMP-N-acetyl-beta-neuraminate(out) + AMP(in). It carries out the reaction CDP-L-ribitol(in) + CDP(out) = CDP-L-ribitol(out) + CDP(in). The catalysed reaction is UMP(out) + CMP-N-acetyl-beta-neuraminate(in) = UMP(in) + CMP-N-acetyl-beta-neuraminate(out). Functionally, transports CMP-sialic acid from the cytosol into the Golgi apparatus, functioning as an antiporter that exchanges CMP-sialic acid for CMP. Binds both CMP-sialic acid and free CMP, but has higher affinity for free CMP. Also able to exchange CMP-sialic acid for AMP and UMP. Also mediates the transport of CDP-ribitol. This Homo sapiens (Human) protein is CMP-sialic acid transporter.